The following is a 334-amino-acid chain: Acryloyl-coenzyme A reductase (334 aa).

C38 is a Zn(2+) binding site. Residue Y39 participates in NADP(+) binding. The Zn(2+) site is built by H60, D90, C93, C96, C104, and C146. Residues 173–176 (SGGV) and 195–197 (TTS) each bind NADP(+).

Belongs to the zinc-containing alcohol dehydrogenase family. As to quaternary structure, monomer. It depends on Zn(2+) as a cofactor.

It catalyses the reaction propanoyl-CoA + NADP(+) = acryloyl-CoA + NADPH + H(+). In terms of biological role, plays a role in autotrophic carbon fixation via the 3-hydroxypropionate/4-hydroxybutyrate cycle. Catalyzes the acryloyl-CoA dependent NADPH oxidation and formation of propionyl-CoA. Inactive towards 3-hydroxypropionyl-CoA, NADH and crotonyl-CoA. In Sulfurisphaera tokodaii (strain DSM 16993 / JCM 10545 / NBRC 100140 / 7) (Sulfolobus tokodaii), this protein is Acryloyl-coenzyme A reductase.